A 689-amino-acid polypeptide reads, in one-letter code: MTDNNQNNENHENSSENSKADEMRAGAFERFTNRKKRFRENAQKNAEYSNHEASSHHKKEHRPNKKPNNHHKQKHAKTRNYAQEELDSNKVEGVTEILHVNERGTLGFHKELKKGVEANNKIQVEHLNPHYKMNLNSKASVKITPLGGLGEIGGNMMVIETPKSAIVIDAGMSFPKEGLFGVDILIPDFSYLHQIKDKIAGIIITHAHEDHIGATPYLFKELQFPLYGTPLSLGLIGSKFDEHGLKKYRSYFKIVEKRCPISVGEFIIEWIHITHSIIDSSALAIQTKAGTIIHTGDFKIDHTPVDNLPTDLYRLAHYGEKGVMLLLSDSTNSHKSGTTPSESTIAPAFDTLFKEAQGRVIMSTFSSNIHRVYQAIQYGIKYNRKIAVIGRSMEKNLDIARELGYIHLPYQSFIEANEVAKYPDNEILIVTTGSQGETMSALYRMATDEHRHISIKPNDLVIISAKAIPGNEASVSAVLNFLIKKEAKVAYQEFDNIHVSGHAAQEEQKLMLRLIKPKFFLPVHGEYNHVARHKQTAISCGVPEKNIYLMEDGDQVEVGPAFIKKVGTIKSGKSYVDNQSNLSIDTSIVQQREEVASAGVFVATIFVNKNKQALLESSQFSSLGLVGFKDEKPLIKEIQGGLEVLLKSSNAEILNNPKKLEDHTRNFIRKALFKKFRKYPAIICHAHSF.

The tract at residues 1–88 is disordered; the sequence is MTDNNQNNEN…RNYAQEELDS (88 aa). A compositionally biased stretch (basic and acidic residues) spans 9 to 24; sequence ENHENSSENSKADEMR. Residues 56-78 are compositionally biased toward basic residues; that stretch reads HHKKEHRPNKKPNNHHKQKHAKT. N6-acetyllysine occurs at positions 132 and 138. 6 residues coordinate Zn(2+): histidine 206, histidine 208, aspartate 210, histidine 211, histidine 275, and aspartate 297. Residues lysine 321, lysine 335, and lysine 395 each carry the N6-acetyllysine modification. Substrate is bound at residue 498 to 502; that stretch reads HVSGH. Lysine 509 is modified (N6-acetyllysine). Histidine 524 is a Zn(2+) binding site. An N6-acetyllysine mark is found at lysine 545, lysine 632, and lysine 647.

Belongs to the metallo-beta-lactamase superfamily. RNA-metabolizing metallo-beta-lactamase-like family. Bacterial RNase J subfamily. In terms of assembly, homodimer. Homotetramer; dimer of homodimers. Interacts with RNA helicase RhpA, might be a member of a minimal RNA degradosome complex. Zn(2+) serves as cofactor. In terms of processing, acetylated on nine lysine residues. Some of the residues are acetylated by multiple different mechanisms. RimL is partially responsible for the acetylation of Lys-321, Lys-395 and Lys-647. HPB8_1270 homolog is partially responsible for the acetylation of Lys-321, Lys-395, Lys-509 and Lys-647. Acetyl-phosphate-mediated non-enzymatic acetylation pathway takes part in the acetylation of Lys-132, Lys-321, Lys-395, Lys-509 and Lys-647. Acetylation of the remaining residues Lys-138, Lys-335, Lys-545 and Lys-632 occurs by a yet undetermined mechanism. Acetylation on a number of these residues is important for growth regulation and proper cell morphology.

It is found in the cytoplasm. Catalytic activity is regulated by the balance between homodimers and homotetramers, with homotetramers being the active forms of this enzyme. Acetylation allosterically regulates the homooligomerization state and hence the catalytic activity. Functionally, an RNase that has 5'-3' exoribonuclease and endoribonuclease activity. Degrades 5'-monophosphorylated ssRNA and dsRNA, considerably more active on ssRNA. Association with RhpA significantly increases the dsRNase activity. Degrades RNA substrate with hairpin structures at both ends with low activity, but presence of RhpA significantly increases the activity on this substrate. Stimulates ATPase activity of RNA helicase RhpA. Involved in stabilization of mRNA but apparently not rRNA. The sequence is that of Ribonuclease J from Helicobacter pylori (strain ATCC 700392 / 26695) (Campylobacter pylori).